A 251-amino-acid polypeptide reads, in one-letter code: Probable transcriptional regulatory protein Cgl1663/cg1872 (251 aa).

A disordered region spans residues 1-22 (MSGHSKWATTKHKKAANDAKRG).

The protein belongs to the TACO1 family.

It localises to the cytoplasm. This chain is Probable transcriptional regulatory protein Cgl1663/cg1872, found in Corynebacterium glutamicum (strain ATCC 13032 / DSM 20300 / JCM 1318 / BCRC 11384 / CCUG 27702 / LMG 3730 / NBRC 12168 / NCIMB 10025 / NRRL B-2784 / 534).